We begin with the raw amino-acid sequence, 20 residues long: Sperm acrosome membrane-associated protein 3, processed form (20 aa).

The protein belongs to the glycosyl hydrolase 22 family.

In terms of biological role, sperm surface membrane protein that may be involved in sperm-egg plasma membrane adhesion and fusion during fertilization. It could be a potential receptor for the egg oligosaccharide residue N-acetylglucosamine, which is present in the extracellular matrix over the egg plasma membrane. The sequence is that of Sperm acrosome membrane-associated protein 3, processed form (SPACA3) from Vulpes vulpes (Red fox).